Here is a 442-residue protein sequence, read N- to C-terminus: ATP-dependent RNA helicase SUB2 (442 aa).

The short motif at 59–87 is the Q motif element; that stretch reads TGFRDFLLKPELLRAISDLGFEHPSEVQQ. A Helicase ATP-binding domain is found at 90–265; it reads IPQAILGTDV…KKFMQSPLEI (176 aa). 103-110 serves as a coordination point for ATP; the sequence is AKSGMGKT. Residues 212–215 carry the DECD box motif; sequence DECD. In terms of domain architecture, Helicase C-terminal spans 277 to 438; sequence GLQQFYLKLE…TLPETVDPAT (162 aa).

Belongs to the DEAD box helicase family. DECD subfamily.

Its subcellular location is the nucleus. The catalysed reaction is ATP + H2O = ADP + phosphate + H(+). Functionally, ATP-binding RNA helicase involved in transcription elongation and required for the export of mRNA out of the nucleus. SUB2 also plays a role in pre-mRNA splicing and spliceosome assembly. May be involved in rDNA and telomeric silencing, and maintenance of genome integrity. This Cryptococcus neoformans var. neoformans serotype D (strain JEC21 / ATCC MYA-565) (Filobasidiella neoformans) protein is ATP-dependent RNA helicase SUB2 (SUB2).